The primary structure comprises 238 residues: Uridylate kinase (238 aa).

Residue 12–15 participates in ATP binding; that stretch reads KLSG. Glycine 54 serves as a coordination point for UMP. Residues glycine 55 and arginine 59 each coordinate ATP. UMP-binding positions include aspartate 74 and 135 to 142; that span reads TGNPYFTT. The ATP site is built by threonine 162, asparagine 163, tyrosine 168, and aspartate 171.

The protein belongs to the UMP kinase family. Homohexamer.

Its subcellular location is the cytoplasm. The catalysed reaction is UMP + ATP = UDP + ADP. The protein operates within pyrimidine metabolism; CTP biosynthesis via de novo pathway; UDP from UMP (UMPK route): step 1/1. Its activity is regulated as follows. Inhibited by UTP. Functionally, catalyzes the reversible phosphorylation of UMP to UDP. The polypeptide is Uridylate kinase (Nitrobacter winogradskyi (strain ATCC 25391 / DSM 10237 / CIP 104748 / NCIMB 11846 / Nb-255)).